A 359-amino-acid chain; its full sequence is MQILADLLNTIPAINSAAMSRAQRHVDGLLKPVGSLGKLEALAIQLAGMPGLNGIPHVGKKAVLVMCADHGVWEEGVAISPKEVTAIQAENMTRGTTGVCVLAAQAGANVHVIDVGIDTAEPIPGLINMRVARGSGNIASAPAMSRRQAEKLLLDVICYTRELAKNGVTLFGVGELGMANTTPAAAIVSTITGRDPEEVVGIGANLPTDKLANKIDVVRRAITLNQPNPQDGVDVLAKVGGFDLVGIAGVMLGAASCGLPVLLDGFLSYAAALAACQMSPAIKPYLIPSHLSAEKGARIALSHLGLEPYLNMDMRLGEGSGAALAMSIIEAACAIYNNMGELAASNIVLPGNTTSDLNS.

The active-site Proton acceptor is E318.

The protein belongs to the CobT family. In terms of assembly, homodimer.

The catalysed reaction is 5,6-dimethylbenzimidazole + nicotinate beta-D-ribonucleotide = alpha-ribazole 5'-phosphate + nicotinate + H(+). It functions in the pathway nucleoside biosynthesis; alpha-ribazole biosynthesis; alpha-ribazole from 5,6-dimethylbenzimidazole: step 1/2. Catalyzes the synthesis of alpha-ribazole-5'-phosphate from nicotinate mononucleotide (NAMN) and 5,6-dimethylbenzimidazole (DMB). This Escherichia coli (strain UTI89 / UPEC) protein is Nicotinate-nucleotide--dimethylbenzimidazole phosphoribosyltransferase.